Reading from the N-terminus, the 472-residue chain is Argininosuccinate lyase (472 aa).

Belongs to the lyase 1 family. Argininosuccinate lyase subfamily.

It localises to the cytoplasm. It catalyses the reaction 2-(N(omega)-L-arginino)succinate = fumarate + L-arginine. The protein operates within amino-acid biosynthesis; L-arginine biosynthesis; L-arginine from L-ornithine and carbamoyl phosphate: step 3/3. The polypeptide is Argininosuccinate lyase (Synechococcus sp. (strain CC9902)).